The primary structure comprises 343 residues: Transcription factor MYB11 (343 aa).

HTH myb-type domains lie at 9-61 (KVGI…INYL) and 62-116 (RSDI…SRKL). 2 DNA-binding regions (H-T-H motif) span residues 37–61 (WRSL…INYL) and 89–112 (WSTI…NSHL). Positions 126 to 146 (ANTVENAPPPPKRRPGRTSRS) are disordered.

As to expression, expressed in seedlings, roots, cotyledons, leaves and apical meristems.

The protein resides in the nucleus. Functionally, modulates overall growth by reducing the proliferation activity of meristematic cells and delaying development. Flavonol-specific transcription activator involved in the regulation of several genes of flavonoid biosynthesis. Activates the expression of CHS, CHI, F3H and FLS1. Confers tolerance to UV-B. In Arabidopsis thaliana (Mouse-ear cress), this protein is Transcription factor MYB11.